We begin with the raw amino-acid sequence, 474 residues long: PTS system N-acetylmuramic acid-specific EIIBC component (474 aa).

In terms of domain architecture, PTS EIIB type-1 spans 1-89 (MAKEISSELL…SELLGEAPVQ (89 aa)). Residues 1–123 (MAKEISSELL…LAKFATIFTP (123 aa)) lie on the Cytoplasmic side of the membrane. Cys-29 serves as the catalytic Phosphocysteine intermediate; for EIIB activity. Residues 115–474 (AKFATIFTPL…LFGCRNVNLD (360 aa)) form the PTS EIIC type-1 domain. Residues 124 to 144 (LIPGFIAAGLLLGIATLIATV) traverse the membrane as a helical segment. The Periplasmic portion of the chain corresponds to 145 to 157 (MHVPADAQGTLPD). The helical transmembrane segment at 158 to 178 (ALNFMKVFSKGLFTFLVILVG) threads the bilayer. The Cytoplasmic segment spans residues 179-180 (YN). Residues 181-201 (AAQAFGGTGVNGAIIAALFLL) form a helical membrane-spanning segment. Residues 202–217 (GYNPAATTGYYAGFHD) lie on the Periplasmic side of the membrane. The chain crosses the membrane as a helical span at residues 218–238 (FFGLPIDPRGNIIGVLIAAWA). The Cytoplasmic portion of the chain corresponds to 239-260 (CARIEGMVRRFMPDDLDMLLTS). Residues 261-281 (LITLLITATLAYLIIMPLGGW) traverse the membrane as a helical segment. Residues 282 to 301 (LFEGMSWLFMHLNSNPLGCA) lie on the Periplasmic side of the membrane. Residues 302-322 (VLAGLFLIAVVFGVHQGFIPV) traverse the membrane as a helical segment. At 323–334 (YLALMDSQGFNS) the chain is on the cytoplasmic side. A helical membrane pass occupies residues 335–355 (LFPILSMAGAGQVGAALALYW). Topologically, residues 356–368 (RAQPHSGLRSQVR) are periplasmic. Residues 369–389 (GAIIPGLLGVGEPLIYGVTLP) traverse the membrane as a helical segment. Over 390-393 (RMKP) the chain is Cytoplasmic. The chain crosses the membrane as a helical span at residues 394–414 (FITACLGGAAGGLFIGLIAWW). The Periplasmic portion of the chain corresponds to 415–440 (GLPMGLNSAFGPSGLVALPLMTSAQG). Residues 441-461 (ILPAMAIYAGGILVAWVCGFI) traverse the membrane as a helical segment. Residues 462 to 474 (FTTLFGCRNVNLD) lie on the Cytoplasmic side of the membrane.

The protein resides in the cell inner membrane. The enzyme catalyses N-acetyl-beta-D-muramate(out) + N(pros)-phospho-L-histidyl-[protein] = N-acetyl-beta-D-muramate 6-phosphate(in) + L-histidyl-[protein]. Functionally, the phosphoenolpyruvate-dependent sugar phosphotransferase system (sugar PTS), a major carbohydrate active transport system, catalyzes the phosphorylation of incoming sugar substrates concomitantly with their translocation across the cell membrane. This system is involved in N-acetylmuramic acid (MurNAc) transport, yielding cytoplasmic MurNAc-6-P. Is also able to take up anhydro-N-acetylmuramic acid (anhMurNAc), but cannot phosphorylate the carbon 6, probably because of the 1,6-anhydro ring. This is PTS system N-acetylmuramic acid-specific EIIBC component (murP) from Shigella dysenteriae serotype 1 (strain Sd197).